We begin with the raw amino-acid sequence, 318 residues long: cAMP/cGMP dual specificity phosphodiesterase MT0825 (318 aa).

Fe cation-binding residues include aspartate 21, histidine 23, and aspartate 63. Residues histidine 23, aspartate 63, and 97–98 contribute to the AMP site; that span reads NH. The Mn(2+) site is built by aspartate 63, asparagine 97, histidine 169, and histidine 207. Position 209 (histidine 209) interacts with Fe cation. AMP is bound at residue histidine 209. The segment at 278–318 is C-terminal extension; sequence PGQARRKIAESGIFIEPSRRDSLFKHPPMVLTSSAPRSPVD.

The protein belongs to the cyclic nucleotide phosphodiesterase class-III family. As to quaternary structure, homodimer. The cofactor is Fe(3+). Mn(2+) is required as a cofactor.

Its subcellular location is the cytoplasm. The protein resides in the cell membrane. It is found in the secreted. It localises to the cell wall. The protein localises to the cell envelope. The enzyme catalyses a nucleoside 2',3'-cyclic phosphate + H2O = a nucleoside 3'-phosphate + H(+). The catalysed reaction is 2',3'-cyclophospho-AMP + H2O = 3'-AMP + H(+). It carries out the reaction 2',3'-cyclophospho-GMP + H2O = 3'-GMP + H(+). It catalyses the reaction a nucleoside 3',5'-cyclic phosphate + H2O = a nucleoside 5'-phosphate + H(+). The enzyme catalyses 3',5'-cyclic AMP + H2O = AMP + H(+). The catalysed reaction is 3',5'-cyclic GMP + H2O = GMP + H(+). Cyclic nucleotide phosphodiesterase with a dual-specificity for the second messengers cAMP and cGMP. In Mycobacterium tuberculosis (strain CDC 1551 / Oshkosh), this protein is cAMP/cGMP dual specificity phosphodiesterase MT0825.